Consider the following 489-residue polypeptide: Bridging integrator 2 (489 aa).

The region spanning valine 28–asparagine 244 is the BAR domain. Residues glutamine 267 to threonine 302 are compositionally biased toward low complexity. The segment at glutamine 267–leucine 489 is disordered. Serine 273 is subject to Phosphoserine. Positions glycine 311–glutamine 331 are enriched in acidic residues. Serine 357 bears the Phosphoserine mark. Low complexity predominate over residues glutamine 358–serine 368. 9 positions are modified to phosphoserine: serine 380, serine 392, serine 420, serine 422, serine 424, serine 430, serine 435, serine 439, and serine 443.

In terms of assembly, homodimer. Interacts with BIN1. Interacts with ARHGEF6 (via SH3 domain), ARHGEF7 (via SH3 domain), SH3GL1, SH3GL2 and SH3GL3. Identified in a complex with ARHGEF6 and GIT2.

It localises to the cytoplasm. It is found in the cell projection. Its subcellular location is the podosome membrane. The protein localises to the cell cortex. The protein resides in the phagocytic cup. Promotes cell motility and migration, probably via its interaction with the cell membrane and with podosome proteins that mediate interaction with the cytoskeleton. Modulates membrane curvature and mediates membrane tubulation. Inhibits phagocytosis. Plays a role in podosome formation. In Mus musculus (Mouse), this protein is Bridging integrator 2 (Bin2).